A 204-amino-acid chain; its full sequence is uncharacterized protein (204 aa).

The Acyl-thioester intermediate role is filled by Cys-52. Catalysis depends on residues His-89 and Asp-104.

This sequence belongs to the arylamine N-acetyltransferase family.

This is an uncharacterized protein from Acanthamoeba polyphaga mimivirus (APMV).